Consider the following 556-residue polypeptide: Solute carrier family 22 member 20 (556 aa).

At 1–15 (MAFTDLLDALGGVGR) the chain is on the cytoplasmic side. Residues 16–36 (FQLVYTALLLLPCGLLACHTF) form a helical membrane-spanning segment. Residues 37 to 137 (LQNFTAAAPP…LVCEARTLRD (101 aa)) are Extracellular-facing. N-linked (GlcNAc...) asparagine glycans are attached at residues N39, N54, N61, and N96. The helical transmembrane segment at 138 to 158 (LAQSIYMSGVLVGAALFGGLA) threads the bilayer. Over 159–166 (DRLGRKAP) the chain is Cytoplasmic. A helical transmembrane segment spans residues 167–187 (LVWSYLQLAVSGAATAYVGSF). The Extracellular portion of the chain corresponds to 188–194 (SAYCVFR). The chain crosses the membrane as a helical span at residues 195 to 215 (FLMGMTFSGIILNSLSLVVEW). Over 216 to 225 (MPTRGRTVAG) the chain is Cytoplasmic. Residues 226–246 (ILLGFSFTLGQLILAGVAYLI) form a helical membrane-spanning segment. Over 247-250 (RPWR) the chain is Extracellular. The helical transmembrane segment at 251-271 (WLQFAVSAPFLVFFLYSWWLP) threads the bilayer. At 272–339 (ESSRWLLLHG…DLFRTPAIRR (68 aa)) the chain is on the cytoplasmic side. A helical transmembrane segment spans residues 340–360 (VTCCLMGVWFSNSVAYYGLAM). The Extracellular portion of the chain corresponds to 361–366 (DLQKFG). Residues 367-387 (LSIYLVQALFGIIDIPAMLVA) traverse the membrane as a helical segment. The Cytoplasmic portion of the chain corresponds to 388–397 (TTTMIYVGRR). Residues 398–418 (ATVSSFLILAGLMVIANMFMP) traverse the membrane as a helical segment. Topologically, residues 419–425 (EDLQTLR) are extracellular. Residues 426 to 446 (TVQAALGKGCLASSFICVYLF) traverse the membrane as a helical segment. The Cytoplasmic portion of the chain corresponds to 447–457 (TGELYPTEIRQ). The helical transmembrane segment at 458-478 (MGMGFASVNARLGGLVAPLIT) threads the bilayer. At 479 to 485 (TLGEISP) the chain is on the extracellular side. A helical membrane pass occupies residues 486–506 (VLPPVSFGATSVLAGMAVACF). Topologically, residues 507-556 (LTETRNVPLVETIAAMERRVKQGRSKRDTEQKSEEISLQQLGASPLKETI) are cytoplasmic. Residues 526–541 (VKQGRSKRDTEQKSEE) are compositionally biased toward basic and acidic residues. The interval 526–556 (VKQGRSKRDTEQKSEEISLQQLGASPLKETI) is disordered.

This sequence belongs to the major facilitator (TC 2.A.1) superfamily. Organic cation transporter (TC 2.A.1.19) family. As to expression, highly expressed in olfactory mucosa. Weakly expressed in testis. Not detected in heart, spleen, lung, kidney or brain.

Its subcellular location is the membrane. Organic anion transporter that mediates the uptake of estrone sulfate. Inhibited by probenecid, propionate, 2-methylbutyrate, 3-methylbutyrate, benzoate, heptanoate and 2-ethylhaxanoate. May act as an odorant transporter. The polypeptide is Solute carrier family 22 member 20 (Slc22a20) (Mus musculus (Mouse)).